A 150-amino-acid chain; its full sequence is Cyanate hydratase (150 aa).

Residues R91, E94, and S117 contribute to the active site.

The protein belongs to the cyanase family.

The catalysed reaction is cyanate + hydrogencarbonate + 3 H(+) = NH4(+) + 2 CO2. Its function is as follows. Catalyzes the reaction of cyanate with bicarbonate to produce ammonia and carbon dioxide. This is Cyanate hydratase from Synechococcus sp. (strain CC9311).